A 372-amino-acid polypeptide reads, in one-letter code: Probable butyrate kinase (372 aa).

This sequence belongs to the acetokinase family.

The protein localises to the cytoplasm. It carries out the reaction butanoate + ATP = butanoyl phosphate + ADP. The polypeptide is Probable butyrate kinase (Oleidesulfovibrio alaskensis (strain ATCC BAA-1058 / DSM 17464 / G20) (Desulfovibrio alaskensis)).